The primary structure comprises 235 residues: tRNA (guanine-N(1)-)-methyltransferase (235 aa).

S-adenosyl-L-methionine contacts are provided by residues glycine 112 and 132-137 (IGDYVL).

It belongs to the RNA methyltransferase TrmD family. In terms of assembly, homodimer.

It localises to the cytoplasm. It carries out the reaction guanosine(37) in tRNA + S-adenosyl-L-methionine = N(1)-methylguanosine(37) in tRNA + S-adenosyl-L-homocysteine + H(+). Specifically methylates guanosine-37 in various tRNAs. The polypeptide is tRNA (guanine-N(1)-)-methyltransferase (Cytophaga hutchinsonii (strain ATCC 33406 / DSM 1761 / CIP 103989 / NBRC 15051 / NCIMB 9469 / D465)).